Here is a 130-residue protein sequence, read N- to C-terminus: Anti-adapter protein IraD (130 aa).

It belongs to the GpW/Gp25 family. IraD subfamily. Interacts with RssB.

The protein localises to the cytoplasm. In terms of biological role, inhibits RpoS proteolysis by regulating RssB activity, thereby increasing the stability of the sigma stress factor RpoS during oxidative stress. Its effect on RpoS stability is due to its interaction with RssB, which probably blocks the interaction of RssB with RpoS, and the consequent delivery of the RssB-RpoS complex to the ClpXP protein degradation pathway. In Escherichia coli O7:K1 (strain IAI39 / ExPEC), this protein is Anti-adapter protein IraD.